A 91-amino-acid polypeptide reads, in one-letter code: ATP synthase subunit c (91 aa).

2 consecutive transmembrane segments (helical) span residues 4–24 (LTMC…GTGI) and 53–73 (IGLA…LIIL).

Belongs to the ATPase C chain family. In terms of assembly, F-type ATPases have 2 components, F(1) - the catalytic core - and F(0) - the membrane proton channel. F(1) has five subunits: alpha(3), beta(3), gamma(1), delta(1), epsilon(1). F(0) has three main subunits: a(1), b(2) and c(10-14). The alpha and beta chains form an alternating ring which encloses part of the gamma chain. F(1) is attached to F(0) by a central stalk formed by the gamma and epsilon chains, while a peripheral stalk is formed by the delta and b chains.

It localises to the cell inner membrane. Its function is as follows. F(1)F(0) ATP synthase produces ATP from ADP in the presence of a proton or sodium gradient. F-type ATPases consist of two structural domains, F(1) containing the extramembraneous catalytic core and F(0) containing the membrane proton channel, linked together by a central stalk and a peripheral stalk. During catalysis, ATP synthesis in the catalytic domain of F(1) is coupled via a rotary mechanism of the central stalk subunits to proton translocation. Key component of the F(0) channel; it plays a direct role in translocation across the membrane. A homomeric c-ring of between 10-14 subunits forms the central stalk rotor element with the F(1) delta and epsilon subunits. This is ATP synthase subunit c from Geobacter metallireducens (strain ATCC 53774 / DSM 7210 / GS-15).